The primary structure comprises 102 residues: Small ribosomal subunit protein uS10 (102 aa).

This sequence belongs to the universal ribosomal protein uS10 family. As to quaternary structure, part of the 30S ribosomal subunit.

In terms of biological role, involved in the binding of tRNA to the ribosomes. The sequence is that of Small ribosomal subunit protein uS10 from Halalkalibacterium halodurans (strain ATCC BAA-125 / DSM 18197 / FERM 7344 / JCM 9153 / C-125) (Bacillus halodurans).